The chain runs to 709 residues: Anillin-like protein 3 (709 aa).

Residues 584-705 (DMEYRGFLHI…WLSAINDTLD (122 aa)) enclose the PH domain.

In Caenorhabditis elegans, this protein is Anillin-like protein 3 (ani-3).